Consider the following 352-residue polypeptide: Protein RecA (352 aa).

65 to 72 (GPESSGKT) is a binding site for ATP.

It belongs to the RecA family.

The protein localises to the cytoplasm. Can catalyze the hydrolysis of ATP in the presence of single-stranded DNA, the ATP-dependent uptake of single-stranded DNA by duplex DNA, and the ATP-dependent hybridization of homologous single-stranded DNAs. It interacts with LexA causing its activation and leading to its autocatalytic cleavage. The polypeptide is Protein RecA (Pseudomonas fluorescens (strain Pf0-1)).